The primary structure comprises 1588 residues: Ubiquitin carboxyl-terminal hydrolase 54 (1588 aa).

Residue R12 is modified to Omega-N-methylarginine. Positions 31 to 352 (KGLSNEPGQN…QPLLLLYADP (322 aa)) constitute a USP domain. C42 (nucleophile) is an active-site residue. Residues H67, C69, C74, C77, H133, C145, C150, H153, C166, C169, C225, and C229 each contribute to the Zn(2+) site. Catalysis depends on H302, which acts as the Proton acceptor. Basic and acidic residues-rich tracts occupy residues 380–391 (DSGHLTDSECNQ) and 424–434 (SEGETLKEKQA). 2 disordered regions span residues 380 to 447 (DSGH…TSRL) and 459 to 519 (HSRP…PTWR). The residue at position 424 (S424) is a Phosphoserine. Composition is skewed to polar residues over residues 436-445 (RNASKSSSTS) and 459-471 (HSRP…TNAA). Residues 499–512 (TESTSSEARSSSSS) show a composition bias toward low complexity. Phosphoserine is present on residues S574, S613, and S616. Positions 601 to 616 (ESGYESSERNSSSPVS) are enriched in low complexity. The disordered stretch occupies residues 601-620 (ESGYESSERNSSSPVSLDAA). Residues 678 to 712 (TSKSELDELQEEVARRAQEQELRKKREKELEAAKG) adopt a coiled-coil conformation. 5 disordered regions span residues 801–839 (RSLQ…EQSV), 856–895 (DSEL…SPPG), 950–969 (EDNS…TTQD), 1093–1172 (TRDV…SRRR), and 1525–1562 (GSVL…SAGE). A compositionally biased stretch (low complexity) spans 808-825 (QQQPPSQQPVQPSASLPS). Positions 878–895 (SLVSPSPAQSVSQHSPPG) are enriched in polar residues. Phosphoserine is present on S1138. The segment covering 1536–1547 (RRIDVPPDDDGR) has biased composition (basic and acidic residues).

Belongs to the peptidase C19 family.

It catalyses the reaction Thiol-dependent hydrolysis of ester, thioester, amide, peptide and isopeptide bonds formed by the C-terminal Gly of ubiquitin (a 76-residue protein attached to proteins as an intracellular targeting signal).. In terms of biological role, deubiquitinase that specifically mediates 'Lys-63'-linked deubiquitination of substrates with a polyubiquitin chain composed of at least 3 ubiquitins. Specifically recognizes ubiquitin chain in position S2 and catalyzes cleavage of polyubiquitin within 'Lys-63'-linked chains. Not able to deubiquitinate substrates with shorter ubiquitin chains. Mediates deubiquitination of PLK4, maintaining PLK4 stability by reducing its ubiquitination-mediated degradation. The sequence is that of Ubiquitin carboxyl-terminal hydrolase 54 (Usp54) from Rattus norvegicus (Rat).